Here is a 174-residue protein sequence, read N- to C-terminus: RNA pyrophosphohydrolase (174 aa).

Residues 6–149 enclose the Nudix hydrolase domain; that stretch reads GYRPNVGIIL…KRDVYLGALK (144 aa). The Nudix box motif lies at 38–59; that stretch reads GGIKPGESPETAMYRELYEEVG.

Belongs to the Nudix hydrolase family. RppH subfamily. A divalent metal cation is required as a cofactor.

Its function is as follows. Accelerates the degradation of transcripts by removing pyrophosphate from the 5'-end of triphosphorylated RNA, leading to a more labile monophosphorylated state that can stimulate subsequent ribonuclease cleavage. This chain is RNA pyrophosphohydrolase, found in Neisseria meningitidis serogroup C / serotype 2a (strain ATCC 700532 / DSM 15464 / FAM18).